Consider the following 192-residue polypeptide: Anthrone oxygenase (192 aa).

3 helical membrane passes run 12 to 32, 54 to 74, and 86 to 106; these read IVTG…TVPV, GHIS…YIAA, and AALV…VMSS. Asn130, Asn138, and Asn147 each carry an N-linked (GlcNAc...) asparagine glycan. The helical transmembrane segment at 172–192 threads the bilayer; sequence MHLVRSLFPLMAAVLGVGICV.

Belongs to the anthrone oxygenase family.

It localises to the membrane. The catalysed reaction is emodin anthrone + O2 = emodin + H2O + H(+). The protein operates within secondary metabolite biosynthesis. Functionally, anthrone oxygenase; part of the gene cluster that mediates the biosynthesis of monodictyphenone, a prenyl xanthone derivative. The pathway begins with the synthesis of atrochrysone thioester by the polyketide synthase (PKS) mdpG. The atrochrysone carboxyl ACP thioesterase mdpF then breaks the thioester bond and releases the atrochrysone carboxylic acid from mdpG. The atrochrysone carboxylic acid is then converted to atrochrysone which is further transformed into emodin anthrone by mdpH-1 and mdpH-2. Emodin is further modified to yield monodictyphenone via several steps involving mdpB, mdpC mdpJ, mdpK and mdpL. These enzymes with xptA, xptB and xptC are also proposed to be involved in the synthesis of shamixanthone from emodin. Especially, direct reduction of emodin by the short chain dehydrogenase mdpC followed by dehydration catalyzed by the scytalone dehydratase-like protein mdpB gives loss of oxygen and formation of chrysophanol intermediate in two simple steps. The chain is Anthrone oxygenase from Emericella nidulans (strain FGSC A4 / ATCC 38163 / CBS 112.46 / NRRL 194 / M139) (Aspergillus nidulans).